A 372-amino-acid chain; its full sequence is 7-methylxanthosine synthase 1 (372 aa).

Residue Y18 participates in S-adenosyl-L-homocysteine binding. The xanthosine site is built by N21 and N25. The S-adenosyl-L-homocysteine site is built by C62, N67, D101, L102, S140, F141, and C157. Y158 serves as a coordination point for xanthosine. C159 is an S-adenosyl-L-homocysteine binding site. Xanthosine contacts are provided by Q161 and W162. Mg(2+) is bound by residues N179, D261, F263, and N264. Xanthosine-binding residues include S316, Y321, and Y356.

The protein belongs to the methyltransferase superfamily. Type-7 methyltransferase family. It depends on Mg(2+) as a cofactor. Expressed in stems, young leaves, floral buds, developing endosperm and immature fruits (grains). Detected in roots and old leaves, but not in mature fruits.

It catalyses the reaction xanthosine + S-adenosyl-L-methionine = 7-methylxanthosine + S-adenosyl-L-homocysteine. The protein operates within alkaloid biosynthesis. In terms of biological role, involved in the biosynthesis of caffeine. Specific for xanthosine and could not use xanthosine 5'-monophosphate (XMP) as substrate. Catalyzes the 7-N-methylation activity of xanthosine, but does not have 1-N- or 3-N-methylation activity. The chain is 7-methylxanthosine synthase 1 from Coffea arabica (Arabian coffee).